The chain runs to 141 residues: Hemoglobin subunit alpha (141 aa).

The Globin domain maps to 1–141 (VLSAADKTHV…VSTVLVSKYR (141 aa)). Ser3 is subject to Phosphoserine. Residue Lys7 is modified to N6-succinyllysine. Thr8 carries the phosphothreonine modification. Residue Lys11 is modified to N6-succinyllysine. Lys16 carries the N6-acetyllysine; alternate modification. Lys16 is subject to N6-succinyllysine; alternate. Ser35 is modified (phosphoserine). Lys40 carries the N6-succinyllysine modification. A Phosphoserine modification is found at Ser49. His58 lines the O2 pocket. His87 provides a ligand contact to heme b. Ser102 carries the phosphoserine modification. Phosphothreonine is present on Thr108. Phosphoserine is present on Ser124. Thr134 is modified (phosphothreonine). Residue Ser138 is modified to Phosphoserine.

The protein belongs to the globin family. As to quaternary structure, heterotetramer of two alpha chains and two beta chains. Red blood cells.

Its function is as follows. Involved in oxygen transport from the lung to the various peripheral tissues. Hemopressin acts as an antagonist peptide of the cannabinoid receptor CNR1. Hemopressin-binding efficiently blocks cannabinoid receptor CNR1 and subsequent signaling. In Dasypus novemcinctus (Nine-banded armadillo), this protein is Hemoglobin subunit alpha (HBA).